Here is a 462-residue protein sequence, read N- to C-terminus: Tubulin alpha-4 chain (462 aa).

8 residues coordinate GTP: Gln11, Glu82, Ser151, Gly155, Thr156, Thr190, Asn217, and Asn239. Glu82 is a binding site for Mg(2+). The active site involves Glu265.

It belongs to the tubulin family. Dimer of alpha and beta chains. A typical microtubule is a hollow water-filled tube with an outer diameter of 25 nm and an inner diameter of 15 nM. Alpha-beta heterodimers associate head-to-tail to form protofilaments running lengthwise along the microtubule wall with the beta-tubulin subunit facing the microtubule plus end conferring a structural polarity. Microtubules usually have 13 protofilaments but different protofilament numbers can be found in some organisms and specialized cells. The cofactor is Mg(2+).

It is found in the cytoplasm. The protein localises to the cytoskeleton. It catalyses the reaction GTP + H2O = GDP + phosphate + H(+). Its function is as follows. Tubulin is the major constituent of microtubules, a cylinder consisting of laterally associated linear protofilaments composed of alpha- and beta-tubulin heterodimers. Microtubules grow by the addition of GTP-tubulin dimers to the microtubule end, where a stabilizing cap forms. Below the cap, tubulin dimers are in GDP-bound state, owing to GTPase activity of alpha-tubulin. This chain is Tubulin alpha-4 chain (alphaTub67C), found in Drosophila melanogaster (Fruit fly).